The chain runs to 1076 residues: Enhancer of mRNA-decapping protein 4-like protein pdc1 (1076 aa).

Low complexity-rich tracts occupy residues 1–19 (MNEQDLLNSLRRDLNLPNL) and 53–69 (SSLLSLLNAGLNASNQS). Disordered regions lie at residues 1–82 (MNEQ…ASHS), 95–127 (GAKPSGTASGADVKRSDSESTEATSNERPFNPV), and 139–204 (STGP…AEEQ). The span at 70-82 (PSNSGPKYYASHS) shows a compositional bias: polar residues. A compositionally biased stretch (polar residues) spans 153–173 (NDSQDTAFQSSRNMPSDTSVA). Over residues 174–184 (SPDYSHSQSSS) the composition is skewed to low complexity. Polar residues predominate over residues 185 to 195 (PIANYQESGNS). WD repeat units lie at residues 292 to 334 (NSPN…STSE) and 402 to 441 (DTGISAKEYDFSYDGTVFATVDKDALIKIYTVPTTFPSTP). Disordered stretches follow at residues 666–714 (RHST…SPSS) and 892–934 (TAPD…PAQG). Over residues 669–688 (TASPSTVNSGFSTPRSQATG) the composition is skewed to polar residues. S671 and S673 each carry phosphoserine. At T674 the chain carries Phosphothreonine. Positions 695–706 (DKGERFETKDKS) are enriched in basic and acidic residues. The interval 789–1076 (MQVALKEEIA…ISEISVASSN (288 aa)) is interaction with dcp2. The residue at position 1075 (S1075) is a Phosphoserine.

It belongs to the WD repeat EDC4 family. As to quaternary structure, interacts with dcp2; via C-terminus.

The protein resides in the cytoplasm. The protein localises to the P-body. Functionally, involved in P-body formation. Acts as a functional homolog of human EDC4, which plays a role in mRNA decapping in the process of mRNA degradation. Enhances the decapping activity of dcp2. Together with edc3, acts as a scaffolding protein sufficient for the phase transition of the components of the 5' to 3' mRNA degradation machinery to form P-bodies. Intermolecular interactions between the edc3 Sm domain and at least 10 helical leucine-rich motifs in dcp2 and pdc1 build the core of the interaction network of this spontaneous clustering process. The chain is Enhancer of mRNA-decapping protein 4-like protein pdc1 from Schizosaccharomyces pombe (strain 972 / ATCC 24843) (Fission yeast).